We begin with the raw amino-acid sequence, 309 residues long: MTFQVECVESRTEADQGQYGRFSIEPLARGQGTTVGNALRRVLLSNLEGTAVTAVRIGGVNHEFATIPGVREDVLDILLNVRELVVHAHSPQPQIGRLRVVGPATVTAADVDFGPEVEVINPNHYIASLSEGATLEMELKVEWGTGYRAIDRSHDETTALDFLQLDAVFMPVRRVNYSVEDARVGESTAIDRLVLEVWTNGSLSPQEALSQAASCLVALFEPLKNVSVGSTHTADPEPTPESQTPIEDLQLSVRAYNCLKRAQVNSVADLLSYTYEDLLEIKNFGQKSAEEVVEALERIGIKLQESKVS.

Positions 1 to 227 are alpha N-terminal domain (alpha-NTD); sequence MTFQVECVES…ALFEPLKNVS (227 aa). The interval 237–309 is alpha C-terminal domain (alpha-CTD); that stretch reads EPTPESQTPI…GIKLQESKVS (73 aa).

The protein belongs to the RNA polymerase alpha chain family. As to quaternary structure, in cyanobacteria the RNAP catalytic core is composed of 2 alpha, 1 beta, 1 beta', 1 gamma and 1 omega subunit. When a sigma factor is associated with the core the holoenzyme is formed, which can initiate transcription.

The enzyme catalyses RNA(n) + a ribonucleoside 5'-triphosphate = RNA(n+1) + diphosphate. Functionally, DNA-dependent RNA polymerase catalyzes the transcription of DNA into RNA using the four ribonucleoside triphosphates as substrates. This Synechococcus elongatus (strain ATCC 33912 / PCC 7942 / FACHB-805) (Anacystis nidulans R2) protein is DNA-directed RNA polymerase subunit alpha.